A 790-amino-acid chain; its full sequence is cAMP and cAMP-inhibited cGMP 3',5'-cyclic phosphodiesterase 10A (790 aa).

Residues 290-291 (RC), 334-335 (IA), Thr-368, Gln-387, and His-519 each bind 3',5'-cyclic AMP. The PDEase domain occupies 446-763 (TSEEWQGLMR…NQWEKVIRGE (318 aa)). His-519 serves as the catalytic Proton donor. Position 519 (His-519) interacts with 3',5'-cyclic GMP. A divalent metal cation contacts are provided by His-523, His-557, Asp-558, and Asp-668. Residue Gln-720 coordinates 3',5'-cyclic AMP. A 3',5'-cyclic GMP-binding site is contributed by Gln-720. A disordered region spans residues 768 to 790 (WISGPGPAPSKSTPEKLNVKVED). The segment covering 780-790 (TPEKLNVKVED) has biased composition (basic and acidic residues).

Belongs to the cyclic nucleotide phosphodiesterase family. As to quaternary structure, homodimer. A divalent metal cation is required as a cofactor. Detected in striatum (at protein level). Detected in testis and brain.

The protein resides in the cytoplasm. It is found in the cytosol. It catalyses the reaction a nucleoside 3',5'-cyclic phosphate + H2O = a nucleoside 5'-phosphate + H(+). The catalysed reaction is 3',5'-cyclic AMP + H2O = AMP + H(+). The enzyme catalyses 3',5'-cyclic GMP + H2O = GMP + H(+). The protein operates within purine metabolism; 3',5'-cyclic AMP degradation; AMP from 3',5'-cyclic AMP: step 1/1. It participates in purine metabolism; 3',5'-cyclic GMP degradation; GMP from 3',5'-cyclic GMP: step 1/1. Functionally, plays a role in signal transduction by regulating the intracellular concentration of cyclic nucleotides. Can hydrolyze both cAMP and cGMP, but has higher affinity for cAMP and is more efficient with cAMP as substrate. May play a critical role in regulating cAMP and cGMP levels in the striatum, a region of the brain that contributes to the control of movement and cognition. The protein is cAMP and cAMP-inhibited cGMP 3',5'-cyclic phosphodiesterase 10A (Pde10a) of Mus musculus (Mouse).